A 151-amino-acid polypeptide reads, in one-letter code: D-aminoacyl-tRNA deacylase (151 aa).

The Gly-cisPro motif, important for rejection of L-amino acids signature appears at 137 to 138 (GP).

This sequence belongs to the DTD family. As to quaternary structure, homodimer.

It is found in the cytoplasm. It catalyses the reaction glycyl-tRNA(Ala) + H2O = tRNA(Ala) + glycine + H(+). The catalysed reaction is a D-aminoacyl-tRNA + H2O = a tRNA + a D-alpha-amino acid + H(+). In terms of biological role, an aminoacyl-tRNA editing enzyme that deacylates mischarged D-aminoacyl-tRNAs. Also deacylates mischarged glycyl-tRNA(Ala), protecting cells against glycine mischarging by AlaRS. Acts via tRNA-based rather than protein-based catalysis; rejects L-amino acids rather than detecting D-amino acids in the active site. By recycling D-aminoacyl-tRNA to D-amino acids and free tRNA molecules, this enzyme counteracts the toxicity associated with the formation of D-aminoacyl-tRNA entities in vivo and helps enforce protein L-homochirality. The protein is D-aminoacyl-tRNA deacylase of Acaryochloris marina (strain MBIC 11017).